The primary structure comprises 425 residues: UPF0229 protein YE2273 (425 aa).

The segment at 84–110 (TNDRIERPQGGGGGSGSGQGNAGQDGE) is disordered. Residues 92–108 (QGGGGGSGSGQGNAGQD) are compositionally biased toward gly residues.

It belongs to the UPF0229 family.

This chain is UPF0229 protein YE2273, found in Yersinia enterocolitica serotype O:8 / biotype 1B (strain NCTC 13174 / 8081).